Reading from the N-terminus, the 433-residue chain is Serine hydroxymethyltransferase (433 aa).

121-123 (AHV) is a (6S)-5,6,7,8-tetrahydrofolate binding site. Lysine 227 carries the post-translational modification N6-(pyridoxal phosphate)lysine. Glutamate 243 contributes to the (6S)-5,6,7,8-tetrahydrofolate binding site.

Belongs to the SHMT family. Homodimer. The cofactor is pyridoxal 5'-phosphate.

It localises to the cytoplasm. It participates in amino-acid biosynthesis; glycine biosynthesis; glycine from L-serine: step 1/1. In terms of biological role, catalyzes the reversible interconversion of serine and glycine with a modified folate serving as the one-carbon carrier. Also exhibits a pteridine-independent aldolase activity toward beta-hydroxyamino acids, producing glycine and aldehydes, via a retro-aldol mechanism. The protein is Serine hydroxymethyltransferase of Saccharolobus islandicus (strain M.14.25 / Kamchatka #1) (Sulfolobus islandicus).